A 901-amino-acid chain; its full sequence is Putative receptor protein kinase CRINKLY4 (901 aa).

A signal peptide spans 1-24; sequence MDHVPALVLAGCCFLALLPGWACG. Over 25–423 the chain is Extracellular; the sequence is LGSMSSIAVS…SRKLMAFQMR (399 aa). 7 tandem repeats follow at residues 33–68, 72–107, 125–160, 162–195, 203–236, 253–287, and 292–330. The tract at residues 33 to 330 is 7 X 36 AA repeats; that stretch reads VSYGEDGPVF…PLALPMAVPP (298 aa). Residues asparagine 151 and asparagine 179 are each glycosylated (N-linked (GlcNAc...) asparagine). Asparagine 282 is a glycosylation site (N-linked (GlcNAc...) asparagine). 3 disulfide bridges follow: cysteine 338/cysteine 365, cysteine 368/cysteine 382, and cysteine 372/cysteine 390. One copy of the TNFR-Cys repeat lies at 357 to 391; it reads CKPANSRLCLPCSTGCPEGLYESSPCNATADRVCQ. N-linked (GlcNAc...) asparagine glycosylation is present at asparagine 383. A helical membrane pass occupies residues 424-444; it reads IFVAEIVFAVVLVLSVSVTTC. Residues 445–901 are Cytoplasmic-facing; the sequence is LYVRHKLRHC…QENLYLQHNF (457 aa). The region spanning 505–712 is the Protein kinase domain; sequence FSEDSQVGKG…EILSGRKAID (208 aa). ATP contacts are provided by residues 511–519 and lysine 533; that span reads VGKGSFSCV. Aspartate 634 serves as the catalytic Proton acceptor. The segment at 845 to 876 is disordered; the sequence is VTSSQRRKSSASEADIVGRRATDGRNVGSSIG.

This sequence belongs to the protein kinase superfamily. Ser/Thr protein kinase family. As to quaternary structure, homodimer.

Its subcellular location is the cell membrane. It is found in the endosome. The protein localises to the multivesicular body membrane. The catalysed reaction is L-seryl-[protein] + ATP = O-phospho-L-seryl-[protein] + ADP + H(+). The enzyme catalyses L-threonyl-[protein] + ATP = O-phospho-L-threonyl-[protein] + ADP + H(+). Functionally, putative receptor protein kinase. Could play a role in a differentiation signal. The CRINKLY4 (CR4) mutation affects leaf epidermis differentiation such that cell size and morphology are altered, and surface functions are compromised, allowing graft-like fusions between organs. The polypeptide is Putative receptor protein kinase CRINKLY4 (CR4) (Zea mays (Maize)).